The following is a 242-amino-acid chain: Phosphate import ATP-binding protein PstB 1 (242 aa).

Residues 1–237 (MDLYYGSYRA…PKDQRTEDYI (237 aa)) form the ABC transporter domain. ATP is bound at residue 28–35 (GPSGCGKS).

This sequence belongs to the ABC transporter superfamily. Phosphate importer (TC 3.A.1.7) family. The complex is composed of two ATP-binding proteins (PstB), two transmembrane proteins (PstC and PstA) and a solute-binding protein (PstS).

Its subcellular location is the cell membrane. It catalyses the reaction phosphate(out) + ATP + H2O = ADP + 2 phosphate(in) + H(+). Functionally, part of the ABC transporter complex PstSACB involved in phosphate import. Responsible for energy coupling to the transport system. This Symbiobacterium thermophilum (strain DSM 24528 / JCM 14929 / IAM 14863 / T) protein is Phosphate import ATP-binding protein PstB 1.